We begin with the raw amino-acid sequence, 212 residues long: Thymidylate kinase (212 aa).

10 to 17 (GIDGCGKT) serves as a coordination point for ATP.

It belongs to the thymidylate kinase family.

The enzyme catalyses dTMP + ATP = dTDP + ADP. Phosphorylation of dTMP to form dTDP in both de novo and salvage pathways of dTTP synthesis. This Prochlorococcus marinus (strain MIT 9301) protein is Thymidylate kinase.